Consider the following 212-residue polypeptide: Protein-L-isoaspartate O-methyltransferase (212 aa).

Serine 60 is an active-site residue.

This sequence belongs to the methyltransferase superfamily. L-isoaspartyl/D-aspartyl protein methyltransferase family.

It is found in the cytoplasm. It catalyses the reaction [protein]-L-isoaspartate + S-adenosyl-L-methionine = [protein]-L-isoaspartate alpha-methyl ester + S-adenosyl-L-homocysteine. Functionally, catalyzes the methyl esterification of L-isoaspartyl residues in peptides and proteins that result from spontaneous decomposition of normal L-aspartyl and L-asparaginyl residues. It plays a role in the repair and/or degradation of damaged proteins. The chain is Protein-L-isoaspartate O-methyltransferase from Methanococcus maripaludis (strain C7 / ATCC BAA-1331).